The sequence spans 74 residues: uncharacterized protein (74 aa).

Disordered stretches follow at residues 1–26 (MNGP…SGVF) and 46–74 (ITNS…SFTQ). The helical transmembrane segment at 34–50 (VSNKSIMLISLKITNSP) threads the bilayer. A compositionally biased stretch (low complexity) spans 47–74 (TNSPNSNSRGSSSSSSTSKSSSKTSFTQ).

The protein localises to the membrane. This is an uncharacterized protein from Dictyostelium discoideum (Social amoeba).